The following is a 309-amino-acid chain: Dihydroorotate dehydrogenase B (NAD(+)), catalytic subunit (309 aa).

FMN-binding positions include S21 and 45–46 (KA). Substrate contacts are provided by residues K45 and 69–73 (NAIGL). Residues N99 and N127 each contribute to the FMN site. A substrate-binding site is contributed by N127. The active-site Nucleophile is C130. FMN-binding residues include K165 and I191. Position 192-193 (192-193 (NT)) interacts with substrate. Residues G217, 243–244 (GG), and 265–266 (GT) each bind FMN.

The protein belongs to the dihydroorotate dehydrogenase family. Type 1 subfamily. As to quaternary structure, heterotetramer of 2 PyrK and 2 PyrD type B subunits. Requires FMN as cofactor.

Its subcellular location is the cytoplasm. The enzyme catalyses (S)-dihydroorotate + NAD(+) = orotate + NADH + H(+). It participates in pyrimidine metabolism; UMP biosynthesis via de novo pathway; orotate from (S)-dihydroorotate (NAD(+) route): step 1/1. Functionally, catalyzes the conversion of dihydroorotate to orotate with NAD(+) as electron acceptor. The polypeptide is Dihydroorotate dehydrogenase B (NAD(+)), catalytic subunit (pyrD) (Bacillus cytotoxicus (strain DSM 22905 / CIP 110041 / 391-98 / NVH 391-98)).